Consider the following 966-residue polypeptide: Alanine--tRNA ligase, cytoplasmic (966 aa).

Residues His604, His608, Cys723, and His727 each contribute to the Zn(2+) site.

It belongs to the class-II aminoacyl-tRNA synthetase family. As to quaternary structure, monomer. Zn(2+) is required as a cofactor.

The protein resides in the cytoplasm. It catalyses the reaction tRNA(Ala) + L-alanine + ATP = L-alanyl-tRNA(Ala) + AMP + diphosphate. Catalyzes the attachment of alanine to tRNA(Ala) in a two-step reaction: alanine is first activated by ATP to form Ala-AMP and then transferred to the acceptor end of tRNA(Ala). Also edits incorrectly charged tRNA(Ala) via its editing domain. This Drosophila melanogaster (Fruit fly) protein is Alanine--tRNA ligase, cytoplasmic.